We begin with the raw amino-acid sequence, 346 residues long: DNA repair protein XRCC3 (346 aa).

Position 1 is an N-acetylmethionine (M1). G107–T114 is an ATP binding site.

Belongs to the RecA family. RAD51 subfamily. Interacts with RAD51C and RAD51. Part of the CX3 complex consisting of RAD51C and XRCC3; the complex has a ring-like structure arranged into a flat disk around a central channel; CX3 can interact with RAD51 in vitro. Forms a complex with FANCD2, BRCA2 and phosphorylated FANCG. Interacts with SWSAP1 and ZSWIM7; involved in homologous recombination repair. Interacts directly with PALB2 which may serve as a scaffold for a HR complex containing PALB2, BRCA2, RAD51C, RAD51 and XRCC3.

The protein localises to the nucleus. The protein resides in the cytoplasm. It localises to the perinuclear region. Its subcellular location is the mitochondrion. Involved in the homologous recombination repair (HRR) pathway of double-stranded DNA, thought to repair chromosomal fragmentation, translocations and deletions. Part of the RAD51 paralog protein complex CX3 which acts in the BRCA1-BRCA2-dependent HR pathway. Upon DNA damage, CX3 acts downstream of RAD51 recruitment; the complex binds predominantly to the intersection of the four duplex arms of the Holliday junction (HJ) and to junctions of replication forks. Involved in HJ resolution and thus in processing HR intermediates late in the DNA repair process; the function may be linked to the CX3 complex and seems to involve GEN1 during mitotic cell cycle progression. Part of a PALB2-scaffolded HR complex containing BRCA2 and RAD51C and which is thought to play a role in DNA repair by HR. Plays a role in regulating mitochondrial DNA copy number under conditions of oxidative stress in the presence of RAD51 and RAD51C. In Homo sapiens (Human), this protein is DNA repair protein XRCC3 (XRCC3).